A 679-amino-acid chain; its full sequence is MHDKKSPMANSHYLKNLKQQFRNKNLIETTIHLVKCNDHDSLAFLARTYGVPPQLRHVVWPILLKYHPMCISPNITSNTISWDPITNDFILNDPFLKSKAPTDKQDKSDDENILPYDIESIILHDLKKYFHSRSNPAGSSSNANTTNIATPTPVSSSDASTISSMEVLSPSLDYEFQIIETLKNAIVKFLLKWSKIFKYESGLAWIALGLAEWYPIYPYETMSPFNETHSFYEVEDYVVLSGRKHALLSTNNGNNGNSNSSSNNTNNNNTNITSGMHNLSINTNTSLHNSPYISHTLSYLYKEYPLPFELRSKLPTKPIFSFSALFERLALVILHCPDTILAHKQLKNDSNASSSSKANSNFNTNYFPIISGGDLSFQTQVFFKVFSSILPELYQPLTEESSLQPSSSRNSWIYWWLKCSGAKALQRQDRGRVWDLLLGWRPKPNMDTINFFLNYNDKKMDHLYHDTPQCDNEQYWMKDWIALYNNDPFWFPDLDSMALGSKKFPYDYSVFKELILRNRYGGTQSKAQKDNTVPSPGSDSNDKSELKLPFSSIDPHMQLIFIFIAILQFNEFKLLEFEEAEISEFLNNVPLLTKFDDSSYRKLYENTESSITSLPSSPTTSTMASLQSSSNSSAHISNYHMLIEVGNDAKASHCFDDLLNMAGDIWRKWLWRELEESSL.

A Rab-GAP TBC domain is found at 50–441 (GVPPQLRHVV…RVWDLLLGWR (392 aa)). Low complexity predominate over residues 135–153 (NPAGSSSNANTTNIATPTP). 3 disordered regions span residues 135–159 (NPAGSSSNANTTNIATPTPVSSSDA), 250–271 (TNNGNNGNSNSSSNNTNNNNTN), and 524–544 (QSKAQKDNTVPSPGSDSNDKS). The segment covering 524-539 (QSKAQKDNTVPSPGSD) has biased composition (polar residues).

The protein belongs to the OCA5 family.

It is found in the cytoplasm. Its function is as follows. Required for replication of brome mosaic virus (BMV), a positive-strand RNA virus. The chain is Oxidant-induced cell-cycle arrest protein 5 (OCA5) from Saccharomyces cerevisiae (strain RM11-1a) (Baker's yeast).